The following is a 363-amino-acid chain: NAD(P)H-quinone oxidoreductase subunit 1, chloroplastic (363 aa).

6 consecutive transmembrane segments (helical) span residues 30–50 (LVPI…IVWL), 98–118 (FSIG…VIPF), 129–149 (IGIF…LMSG), 248–268 (YSGI…LLSS), 300–320 (IIGT…FLFI), and 343–363 (FLLP…LLSL).

It belongs to the complex I subunit 1 family. NDH is composed of at least 16 different subunits, 5 of which are encoded in the nucleus.

It localises to the plastid. It is found in the chloroplast thylakoid membrane. It catalyses the reaction a plastoquinone + NADH + (n+1) H(+)(in) = a plastoquinol + NAD(+) + n H(+)(out). The catalysed reaction is a plastoquinone + NADPH + (n+1) H(+)(in) = a plastoquinol + NADP(+) + n H(+)(out). NDH shuttles electrons from NAD(P)H:plastoquinone, via FMN and iron-sulfur (Fe-S) centers, to quinones in the photosynthetic chain and possibly in a chloroplast respiratory chain. The immediate electron acceptor for the enzyme in this species is believed to be plastoquinone. Couples the redox reaction to proton translocation, and thus conserves the redox energy in a proton gradient. This chain is NAD(P)H-quinone oxidoreductase subunit 1, chloroplastic, found in Gossypium barbadense (Sea Island cotton).